A 299-amino-acid chain; its full sequence is Oxygen-dependent coproporphyrinogen-III oxidase (299 aa).

Serine 92 is a substrate binding site. Residues histidine 96 and histidine 106 each coordinate a divalent metal cation. The active-site Proton donor is the histidine 106. A substrate-binding site is contributed by 108 to 110; sequence NVR. The a divalent metal cation site is built by histidine 145 and histidine 175. The tract at residues 239–274 is important for dimerization; the sequence is YVEFNLVYDRGTLFGLQSGGRAESILMSLPPQVRWE. 257–259 is a substrate binding site; it reads GGR.

This sequence belongs to the aerobic coproporphyrinogen-III oxidase family. In terms of assembly, homodimer. A divalent metal cation is required as a cofactor.

Its subcellular location is the cytoplasm. The enzyme catalyses coproporphyrinogen III + O2 + 2 H(+) = protoporphyrinogen IX + 2 CO2 + 2 H2O. The protein operates within porphyrin-containing compound metabolism; protoporphyrin-IX biosynthesis; protoporphyrinogen-IX from coproporphyrinogen-III (O2 route): step 1/1. Involved in the heme biosynthesis. Catalyzes the aerobic oxidative decarboxylation of propionate groups of rings A and B of coproporphyrinogen-III to yield the vinyl groups in protoporphyrinogen-IX. This Xanthomonas campestris pv. campestris (strain 8004) protein is Oxygen-dependent coproporphyrinogen-III oxidase.